The primary structure comprises 441 residues: MISRIDLRGDALPEGSALRDLLPRADFDVSAALEKVRPICEAVHHRGDAALIDFAEKFDGVRLESVRVPARALADALEQLDPAVRAALEESIRRARLVHREQRRTTHTTQVVPGGSVTEKWVPVDRVGLYAPGGRSVYPSSVVMNVVPAQEAGVESIALASPAQAEFGGLPHPTILAACALLGVDEVYAAGGATAVAMFAYGTESCAPADMVTGPGNIWVAAAKRYFTGKIGIDAEAGPTEIAVLADSTADPVHVASDLISQAEHDPLAAAVLVTDSVELADAVEKELEPQVAATKHIDDRIVPALKGRQSAIVLVDGVDEGLRVVDAYGAEHLEIQTADAAAVADRVRNAGAIFIGPWAPVSLGDYAAGSNHVLPTGGCACHSSGLSVQSFLRGIHIVDYTKDALADVAHHVVTLAEAEDLPAHGAAIKARFGWKVPESK.

Positions 240, 262, and 265 each coordinate substrate. Q262 and H265 together coordinate Zn(2+). Catalysis depends on proton acceptor residues E332 and H333. Residues H333, D366, E420, and H425 each contribute to the substrate site. D366 lines the Zn(2+) pocket. H425 lines the Zn(2+) pocket.

The protein belongs to the histidinol dehydrogenase family. Requires Zn(2+) as cofactor.

The enzyme catalyses L-histidinol + 2 NAD(+) + H2O = L-histidine + 2 NADH + 3 H(+). Its pathway is amino-acid biosynthesis; L-histidine biosynthesis; L-histidine from 5-phospho-alpha-D-ribose 1-diphosphate: step 9/9. In terms of biological role, catalyzes the sequential NAD-dependent oxidations of L-histidinol to L-histidinaldehyde and then to L-histidine. The chain is Histidinol dehydrogenase from Streptomyces avermitilis (strain ATCC 31267 / DSM 46492 / JCM 5070 / NBRC 14893 / NCIMB 12804 / NRRL 8165 / MA-4680).